Here is an 81-residue protein sequence, read N- to C-terminus: Apolipoprotein C-I, acidic form (81 aa).

An N-terminal signal peptide occupies residues 1–24 (MRLFLSLLVVVLSIVLEGPTPAQG).

This sequence belongs to the apolipoprotein C1 family.

It localises to the secreted. This Theropithecus gelada (Gelada baboon) protein is Apolipoprotein C-I, acidic form (APOC1A).